Consider the following 65-residue polypeptide: Large ribosomal subunit protein bL31 (65 aa).

Zn(2+) contacts are provided by Cys16, Cys18, Cys36, and Cys39.

This sequence belongs to the bacterial ribosomal protein bL31 family. Type A subfamily. As to quaternary structure, part of the 50S ribosomal subunit. Zn(2+) is required as a cofactor.

Binds the 23S rRNA. In Geotalea daltonii (strain DSM 22248 / JCM 15807 / FRC-32) (Geobacter daltonii), this protein is Large ribosomal subunit protein bL31.